The sequence spans 486 residues: UDP-N-acetylmuramate--L-alanine ligase (486 aa).

126 to 132 (GTHGKTS) contacts ATP.

This sequence belongs to the MurCDEF family.

It localises to the cytoplasm. The enzyme catalyses UDP-N-acetyl-alpha-D-muramate + L-alanine + ATP = UDP-N-acetyl-alpha-D-muramoyl-L-alanine + ADP + phosphate + H(+). It functions in the pathway cell wall biogenesis; peptidoglycan biosynthesis. Functionally, cell wall formation. In Buchnera aphidicola subsp. Baizongia pistaciae (strain Bp), this protein is UDP-N-acetylmuramate--L-alanine ligase.